We begin with the raw amino-acid sequence, 2726 residues long: MMNNSNYSDASGLGLVDEADEMPSTEKDLAEDAPWKKIQQNTFTRWCNEHLKCVGKRLTDLQRDLSDGLRLIALLEVLSQKRMYRKFHPRPNFRQMKLENVSVALEFLEREHIKLVSIDSKAIVDGNLKLILGLIWTLILHYSISMPMWEDEDDEDARKQTPKQRLLGWIQNKVPQLPITNFNRDWQDGKALGALVDNCAPGLCPDWEAWDPNQPVQNAREAMQQADDWLGVPQVIAPEEIVDPNVDEHSVMTYLSQFPKAKLKPGAPVRSKQLNPKKAIAYGPGIEPQGNTVLQPAHFTVQTVDAGVGEVLVYIEDPEGHTEEAKVVPNNDKDRTYAVSYVPKVAGLHKVTVLFAGQNIERSPFEVNVGMALGDANKVSARGPGLEPVGNVANKPTYFDIYTAGAGTGDVAVVIVDPQGRRDTVEVALEDKGDNTFRCTYRPVMEGPHTVHVAFAGAPITRSPFPVHVAEACNPNACRASGRGLQPKGVRVKEVADFKVFTKGAGSGELKVTVKGPKGTEEPVKVREAGDGVFECEYYPVVPGKYVVTITWGGYAIPRSPFEVQVSPEAGAQKVRAWGPGLETGQVGKSADFVVEAIGTEVGTLGFSIEGPSQAKIECDDKGDGSCDVRYWPTEPGEYAVHVICDDEDIRDSPFIAHIQPAPPDCFPDKVKAFGPGLEPTGCIVDRPAEFTIDARAAGKGDLKLYAQDADGCPIDIKVIPNGDGTFRCSYVPTKPIKHTIIVSWGGVNVPKSPFRVNVGEGSHPERVKVYGPGVEKTGLKANEPTYFTVDCSEAGQGDVSIGIKCAPGVVGPVEADIDFDIIKNDNDTFTVKYTPPGAGHYTIMVLFANQEIPASPFHIKVDPSHDASKVKAEGPGLSRTGVEVGKPTHFTVLTKGAGKAKLDVHFAGAAKGEAVRDFEIIDNHDYSYTVKYTAVQQGNMAVTVTYGGDPVPKSPFVVNVAPPLDLSKVKVQGLNSKVAVGQEQAFSVNTRGAGGQGQLDVRMTSPSRRPIPCKLEPGGGAEAQAVRYMPPEEGPYKVDITYDGHPVPGSPFAVEGVLPPDPSKVCAYGPGLKGGLVGTPAPFSIDTKGAGTGGLGLTVEGPCEAKIECQDNGDGSCAVSYLPTEPGEYTINILFAEAHIPGSPFKATIQPVFDPSKVRASGPGLERGKAGEAATFTVDCSEAGEAELTIEILSDAGVKAEVLIQNNADGTYHITYSPAFPGTYTITIKYGGHPIPKFPTRVHVQPAVDTSGIKVSGPGVEPHGVLREVTTEFTVDARSLTATGGNHVTARVLNPSGAKTDTYVTDNGDGTYRVQYTAYEEGVHLVEVLYDEVAVPKSPFRVGVTEGCDPTRVRAFGPGLEGGLVNKANRFTVETRGAGTGGLGLAIEGPSEAKMSCKDNKDGSCTVEYIPFTPGDYDVNITFGGQPIPGSPFRVPVKDVVDPGKVKCSGPGLGTGVRARVPQTFTVDCSQAGRAPLQVAVLGPTGVAEPVEVRDNGDGTHTVHYTPATDGPYTVAVKYADQEVPRSPFKIKVLPSHDASKVRASGPGLNASGIPASLPVEFTIDARDAGQGLLTVQILDPEGKPKKANIRDNGDGTYTVSYLPDMSGRYTITIKYGGDEIPYSPFRIHALPTGDASKCLVTVSIGGHGLGACLGPRIQIGEETVITVDAKAAGKGKVTCTVSTPDGAELDVDVVENHDGTFDIYYTAPEPGKYVITIRFGGEHIPNSPFHVLACDPLPHVEEPAEMLQMRQPYAPLRPGTCPTHWATEEPVVPVEPLESMLRPFNLVIPFTVQKGELTGEVRMPSGKTARPNITDNKDGTITVRYAPTEKGLHQMGIKYDGNHIPGSPLQFYVDAINSRHVSAYGPGLSHGMVNKPATFTIVTKDAGEGGLSLAVEGPSKAEITCKDNKDGTCTVSYLPTAPGDYSIIVRFDDKHIPGSPFTAKITGDDSMRTSQLNVGTSTDVSLKITEGDLSQLTASIRAPSGNEEPCLLKRLPNRHIGISFTPKEVGEHVVSVRKSGKHVTNSPFKILVGPSEIGDASKVRVWGKGLSEGQTFQVAEFIVDTRNAGYGGLGLSIEGPSKVDINCEDMEDGTCKVTYCPTEPGTYIINIKFADKHVPGSPFTVKVTGEGRMKESITRRRQAPSIATIGSTCDLNLKIPGNWFQMVSAQERLTRTFTRSSHTYTRTERTEISKTRGGETKREVRVEESTQVGGDPFPAVFGDFLGRERLGSFGSITRQQEGEASSQDMTAQVTSPSGKTEAAEIVEGEDSAYSVRFVPQEMGPHTVTVKYRGQHVPGSPFQFTVGPLGEGGAHKVRAGGTGLERGVAGVPAEFSIWTREAGAGGLSIAVEGPSKAEIAFEDRKDGSCGVSYVVQEPGDYEVSIKFNDEHIPDSPFVVPVASLSDDARRLTVTSLQETGLKVNQPASFAVQLNGARGVIDARVHTPSGAVEECYVSELDSDKHTIRFIPHENGVHSIDVKFNGAHIPGSPFKIRVGEQSQAGDPGLVSAYGPGLEGGTTGVSSEFIVNTQNAGSGALSVTIDGPSKVQLDCRECPEGHVVTYTPMAPGNYLIAIKYGGPQHIVGSPFKAKVTGPRLSGGHSLHETSTVLVETVTKSSSSRGASYSSIPKFSSDASKVVTRGPGLSQAFVGQKNSFTVDCSKAGTNMMMVGVHGPKTPCEEVYVKHMGNRVYNVTYTVKEKGDYILIVKWGDESVPGSPFKVNVP.

An actin-binding region spans residues Met-1–Lys-260. A Phosphoserine modification is found at Ser-5. Calponin-homology (CH) domains are found at residues Lys-37–Ser-143 and Gln-160–Leu-263. 15 Filamin repeats span residues Ser-271 to Val-369, Met-371 to Val-469, Ala-470 to Val-566, Ser-567 to Ile-659, Pro-663 to Val-759, Gly-760 to Val-862, Asp-863 to Val-961, Ala-962 to Gly-1057, Val-1058 to Ile-1150, Gln-1151 to Val-1245, Gln-1246 to Val-1345, Thr-1346 to Val-1438, Lys-1439 to Val-1534, Leu-1535 to Ala-1631, and Asp-1636 to Ala-1735. Arg-1003 carries the post-translational modification Omega-N-methylarginine. Phosphoserine is present on residues Ser-1162 and Ser-1339. The interval Cys-1736–Arg-1759 is hinge 1. 4 Filamin repeats span residues Pro-1760–Val-1855, Asp-1856–Ile-1947, Thr-1948–Val-2034, and Ser-2037–Val-2129. Ser-2043 is modified (phosphoserine). Residues Gly-2163 to Gly-2244 are intradomain insert; mediate targeting to Z lines. The span at Glu-2193 to Glu-2210 shows a compositional bias: basic and acidic residues. The tract at residues Glu-2193–Val-2214 is disordered. The Filamin 20; mediates interaction with XIRP1 repeat unit spans residues Thr-2212–Val-2307. Phosphoserine occurs at positions 2234 and 2237. Phosphothreonine is present on Thr-2239. Residues Gln-2241–Gly-2260 are compositionally biased toward polar residues. Positions Gln-2241–Lys-2261 are disordered. 3 Filamin repeats span residues Leu-2310 to Val-2402, Ser-2404 to Val-2497, and Ser-2501 to Val-2593. An interaction with INPPL1 region spans residues Ser-2404 to Val-2725. Residues Ser-2587, Ser-2618, Ser-2621, Ser-2633, Ser-2715, and Ser-2719 each carry the phosphoserine modification. Residues Thr-2594–Pro-2630 are hinge 2. Residues Thr-2594–Pro-2726 form a self-association site, tail region. The stretch at Lys-2631–Val-2725 is one Filamin 24 repeat.

This sequence belongs to the filamin family. In terms of assembly, homodimer; the filamin repeat 24 and the second hinge domain are important for dimer formation. Interacts with FLNB, INPPL1, ITGB1A, KCND2, MYOT, MYOZ1 and MYOZ3. Interacts with sarcoglycans SGCD and SGCG. Interacts (via filament repeats 17-18, 20-21 and 24) with USP25 (isoform USP25m only). Interacts with FBLIM1. Interacts with XIRP1; this interaction is mediated by filamin 20 repeat. Interacts with KY. Interacts with IGFN1. Interacts with MICALL2. Interacts with ANK3. Interacts with MICALL2. Interacts with ANK3. Interacts with SYNPO2. Ubiquitinated by FBXL22, leading to proteasomal degradation.

It localises to the cytoplasm. It is found in the membrane. Its subcellular location is the cytoskeleton. The protein localises to the myofibril. The protein resides in the sarcomere. It localises to the z line. Its function is as follows. Muscle-specific filamin, which plays a central role in sarcomere assembly and organization. Critical for normal myogenesis, it probably functions as a large actin-cross-linking protein with structural functions at the Z lines in muscle cells. May be involved in reorganizing the actin cytoskeleton in response to signaling events. The sequence is that of Filamin-C (Flnc) from Mus musculus (Mouse).